Here is a 570-residue protein sequence, read N- to C-terminus: Protein HEATR9 (570 aa).

The polypeptide is Protein HEATR9 (HEATR9) (Homo sapiens (Human)).